The chain runs to 229 residues: Large ribosomal subunit protein uL1 (229 aa).

Belongs to the universal ribosomal protein uL1 family. Part of the 50S ribosomal subunit.

In terms of biological role, binds directly to 23S rRNA. The L1 stalk is quite mobile in the ribosome, and is involved in E site tRNA release. Its function is as follows. Protein L1 is also a translational repressor protein, it controls the translation of the L11 operon by binding to its mRNA. This is Large ribosomal subunit protein uL1 from Clostridium botulinum (strain Loch Maree / Type A3).